The sequence spans 644 residues: Beta-mannosyltransferase 2 (644 aa).

Residues 1–6 are Cytoplasmic-facing; sequence MRTRLN. The chain crosses the membrane as a helical span at residues 7–27; that stretch reads FLLLCIASVLSVIWIGVLLTW. Topologically, residues 28–644 are extracellular; that stretch reads NDNNLGGISL…NDKKDLKIRQ (617 aa). N-linked (GlcNAc...) asparagine glycosylation occurs at Asn484. Residues 512–644 are a coiled coil; that stretch reads TRGEAERRRR…NDKKDLKIRQ (133 aa). Residues 517-644 form a disordered region; sequence ERRRRVAEER…NDKKDLKIRQ (128 aa).

It belongs to the BMT family.

The protein resides in the membrane. Its function is as follows. Beta-mannosyltransferase involved in cell wall biosynthesis. Initiates the beta-mannosylation of core N-linked glycans. This is Beta-mannosyltransferase 2 (BMT2) from Komagataella phaffii (strain GS115 / ATCC 20864) (Yeast).